Consider the following 533-residue polypeptide: DNA primase large subunit (533 aa).

The [4Fe-4S] cluster site is built by Cys-298, Cys-377, Cys-393, and Cys-433. The interval 466 to 492 is disordered; the sequence is RQKRANGSAPPKARIRPDIKGHGDRSM. A compositionally biased stretch (basic and acidic residues) spans 480-490; the sequence is IRPDIKGHGDR.

It belongs to the eukaryotic-type primase large subunit family. In terms of assembly, heterodimer of a catalytic subunit Prim1 and a regulatory subunit Prim2, also known as the DNA primase complex. Component of the alpha DNA polymerase complex (also known as the alpha DNA polymerase-primase complex) consisting of four subunits: the catalytic subunit PolA1, the regulatory subunit PolA2, and the primase complex subunits Prim1 and Prim2 respectively. PolA1 associates with the DNA primase complex before association with PolA2. The cofactor is [4Fe-4S] cluster. Expressed in embryos (at protein level).

Functionally, regulatory subunit of the DNA primase complex and component of the DNA polymerase alpha complex (also known as the alpha DNA polymerase-primase complex) which play an essential role in the initiation of DNA synthesis. During the S phase of the cell cycle, the DNA polymerase alpha complex (composed of a catalytic subunit PolA1, an accessory subunit PolA2 and two primase subunits, the catalytic subunit Prim1 and the regulatory subunit Prim2) is recruited to DNA at the replicative forks. The primase subunit of the polymerase alpha complex initiates DNA synthesis by oligomerising short RNA primers on both leading and lagging strands. These primers are initially extended by the polymerase alpha catalytic subunit and subsequently transferred to polymerase delta and polymerase epsilon for processive synthesis on the lagging and leading strand, respectively. In the primase complex, both subunits are necessary for the initial di-nucleotide formation, but the extension of the primer depends only on the catalytic subunit. Stabilizes and modulates the activity of the catalytic subunit. This Drosophila melanogaster (Fruit fly) protein is DNA primase large subunit.